A 213-amino-acid chain; its full sequence is Probable glutathione S-transferase DHAR1, cytosolic (213 aa).

Residues K8 and D19 each contribute to the glutathione site. K8 and D19 together coordinate L-ascorbate. The GST N-terminal domain maps to A10–S89. C20 (nucleophile) is an active-site residue. K47, V60, S74, H160, and W207 together coordinate glutathione. The region spanning D73–A213 is the GST C-terminal domain. Residue K210 coordinates L-ascorbate.

The protein belongs to the GST superfamily. DHAR family. As to quaternary structure, monomer.

The protein resides in the cytoplasm. It is found in the cytosol. The enzyme catalyses RX + glutathione = an S-substituted glutathione + a halide anion + H(+). It catalyses the reaction L-dehydroascorbate + 2 glutathione = glutathione disulfide + L-ascorbate. Functionally, involved in ascorbate homeostasis. Maintains redox pools of ascorbate by recycling dihydroascorbate (DHA) to ascorbate. Involved in scavenging reactive oxygen species (ROS) under oxidative stresses. Possesses dehydroascorbate reductase (DHAR) activity in vitro. May function via a ping-pong reaction mechanism with an electron transfer at the active site. Possesses chaperone-like activity in vitro. In Oryza sativa subsp. japonica (Rice), this protein is Probable glutathione S-transferase DHAR1, cytosolic.